Here is a 237-residue protein sequence, read N- to C-terminus: 1-(5-phosphoribosyl)-5-[(5-phosphoribosylamino)methylideneamino] imidazole-4-carboxamide isomerase (237 aa).

The active-site Proton acceptor is Asp-8. Residue Asp-130 is the Proton donor of the active site.

It belongs to the HisA/HisF family.

The protein resides in the cytoplasm. The enzyme catalyses 1-(5-phospho-beta-D-ribosyl)-5-[(5-phospho-beta-D-ribosylamino)methylideneamino]imidazole-4-carboxamide = 5-[(5-phospho-1-deoxy-D-ribulos-1-ylimino)methylamino]-1-(5-phospho-beta-D-ribosyl)imidazole-4-carboxamide. It participates in amino-acid biosynthesis; L-histidine biosynthesis; L-histidine from 5-phospho-alpha-D-ribose 1-diphosphate: step 4/9. In Caldicellulosiruptor saccharolyticus (strain ATCC 43494 / DSM 8903 / Tp8T 6331), this protein is 1-(5-phosphoribosyl)-5-[(5-phosphoribosylamino)methylideneamino] imidazole-4-carboxamide isomerase.